A 157-amino-acid polypeptide reads, in one-letter code: 2-C-methyl-D-erythritol 2,4-cyclodiphosphate synthase (157 aa).

A divalent metal cation is bound by residues Asp8 and His10. 4-CDP-2-C-methyl-D-erythritol 2-phosphate is bound by residues 8 to 10 (DVH) and 34 to 35 (HS). Residue His42 participates in a divalent metal cation binding. 4-CDP-2-C-methyl-D-erythritol 2-phosphate is bound by residues 56–58 (DIG), 61–65 (FPDTD), 100–106 (AQAPKMA), 132–135 (TTTE), Phe139, and Arg142.

This sequence belongs to the IspF family. In terms of assembly, homotrimer. A divalent metal cation is required as a cofactor.

It carries out the reaction 4-CDP-2-C-methyl-D-erythritol 2-phosphate = 2-C-methyl-D-erythritol 2,4-cyclic diphosphate + CMP. The protein operates within isoprenoid biosynthesis; isopentenyl diphosphate biosynthesis via DXP pathway; isopentenyl diphosphate from 1-deoxy-D-xylulose 5-phosphate: step 4/6. Involved in the biosynthesis of isopentenyl diphosphate (IPP) and dimethylallyl diphosphate (DMAPP), two major building blocks of isoprenoid compounds. Catalyzes the conversion of 4-diphosphocytidyl-2-C-methyl-D-erythritol 2-phosphate (CDP-ME2P) to 2-C-methyl-D-erythritol 2,4-cyclodiphosphate (ME-CPP) with a corresponding release of cytidine 5-monophosphate (CMP). The sequence is that of 2-C-methyl-D-erythritol 2,4-cyclodiphosphate synthase from Pseudomonas paraeruginosa (strain DSM 24068 / PA7) (Pseudomonas aeruginosa (strain PA7)).